We begin with the raw amino-acid sequence, 503 residues long: Maturase K (503 aa).

It belongs to the intron maturase 2 family. MatK subfamily.

The protein resides in the plastid. Its subcellular location is the chloroplast. Its function is as follows. Usually encoded in the trnK tRNA gene intron. Probably assists in splicing its own and other chloroplast group II introns. The protein is Maturase K of Rhamnus cathartica (Common buckthorn).